Here is a 120-residue protein sequence, read N- to C-terminus: Large ribosomal subunit protein uL18 (120 aa).

It belongs to the universal ribosomal protein uL18 family. In terms of assembly, part of the 50S ribosomal subunit; part of the 5S rRNA/L5/L18/L25 subcomplex. Contacts the 5S and 23S rRNAs.

In terms of biological role, this is one of the proteins that bind and probably mediate the attachment of the 5S RNA into the large ribosomal subunit, where it forms part of the central protuberance. The sequence is that of Large ribosomal subunit protein uL18 from Geobacillus thermodenitrificans (strain NG80-2).